Reading from the N-terminus, the 98-residue chain is Cell cycle protein GpsB (98 aa).

A coiled-coil region spans residues 34–71; the sequence is LDLIIKDYEAFQQEIDELRQENARLKRQVEELQKRPAM.

Belongs to the GpsB family. As to quaternary structure, forms polymers through the coiled coil domains. Interacts with PBP1, MreC and EzrA.

The protein resides in the cytoplasm. Its function is as follows. Divisome component that associates with the complex late in its assembly, after the Z-ring is formed, and is dependent on DivIC and PBP2B for its recruitment to the divisome. Together with EzrA, is a key component of the system that regulates PBP1 localization during cell cycle progression. Its main role could be the removal of PBP1 from the cell pole after pole maturation is completed. Also contributes to the recruitment of PBP1 to the division complex. Not essential for septum formation. This Geobacillus kaustophilus (strain HTA426) protein is Cell cycle protein GpsB.